The primary structure comprises 469 residues: uncharacterized protein (469 aa).

Over residues 152–161 (VREGKEEKKG) the composition is skewed to basic and acidic residues. The tract at residues 152–174 (VREGKEEKKGGPPGRGPPGWRRR) is disordered. Coiled coils occupy residues 346 to 375 (KAAL…RSES) and 423 to 453 (SDIT…KIKG).

This is an uncharacterized protein from Homo sapiens (Human).